The primary structure comprises 681 residues: Transferrin (681 aa).

Positions 1–18 (MALKLLTLIALTCAAANA) are cleaved as a signal peptide. Transferrin-like domains are found at residues 23 to 364 (YKLC…ERGH) and 371 to 676 (VRLC…DVIS). 2 disulfide bridges follow: Cys26-Cys60 and Cys35-Cys51. Residues Asp75 and Tyr108 each contribute to the Fe(3+) site. 4 disulfides stabilise this stretch: Cys132/Cys228, Cys181/Cys207, Cys204/Cys213, and Cys271/Cys284. Thr134, Arg138, Val140, and Gly141 together coordinate hydrogencarbonate. N-linked (GlcNAc...) asparagine glycosylation occurs at Asn218. Tyr222 contacts Fe(3+). Asn355 carries an N-linked (GlcNAc...) asparagine glycan. Cystine bridges form between Cys374–Cys411 and Cys384–Cys402. Asn418 carries an N-linked (GlcNAc...) asparagine glycan. Cystine bridges form between Cys478/Cys551, Cys506/Cys678, and Cys579/Cys596.

It belongs to the transferrin family.

It localises to the secreted. Its function is as follows. Transferrins are iron binding transport proteins which bind Fe(3+) ion in association with the binding of an anion, usually bicarbonate. This transferrin binds only one Fe(3+) ion per protein molecule. In Manduca sexta (Tobacco hawkmoth), this protein is Transferrin.